The following is a 325-amino-acid chain: MSQPPEHPGNPADPQGGNQGAGSYPPPGYGAPPPPPGYGPPPGTYLPPGYNAPPPPPGYGPPPGPPPPGYPTHLQSSGFSVGDAISWSWNRFTQNAVTLVVPVLAYAVALAAVIGATAGLVVALSDRATTAYTNTSGVSSESVDITMTPAAGIVMFLGYIALFALVLYMHAGILTGCLDIADGKPVTIATFFRPRNLGLVLVTGLLIVAVTFIGGLLCVIPGLIFGFVAQFAVAFAVDRSTSPIDSVKASIETVGSNIGGSVLSWLAQLTAVLVGELLCFVGMLIGIPVAALIHVYTYRKLSGGQVVEAVRPAPPVGWPPGPQLA.

A disordered region spans residues 1-75 (MSQPPEHPGN…PPPGYPTHLQ (75 aa)). The span at 24 to 70 (YPPPGYGAPPPPPGYGPPPGTYLPPGYNAPPPPPGYGPPPGPPPPGY) shows a compositional bias: pro residues. Helical transmembrane passes span 96–116 (AVTL…VIGA), 153–173 (IVMF…HAGI), 205–225 (LLIV…GLIF), and 273–293 (LVGE…AALI).

The protein resides in the cell membrane. This is an uncharacterized protein from Mycobacterium tuberculosis (strain ATCC 25618 / H37Rv).